A 229-amino-acid polypeptide reads, in one-letter code: Uracil-DNA glycosylase (229 aa).

The active-site Proton acceptor is Asp-64.

This sequence belongs to the uracil-DNA glycosylase (UDG) superfamily. UNG family.

It is found in the cytoplasm. The enzyme catalyses Hydrolyzes single-stranded DNA or mismatched double-stranded DNA and polynucleotides, releasing free uracil.. In terms of biological role, excises uracil residues from the DNA which can arise as a result of misincorporation of dUMP residues by DNA polymerase or due to deamination of cytosine. In Escherichia coli O81 (strain ED1a), this protein is Uracil-DNA glycosylase.